The sequence spans 431 residues: Glucose-1-phosphate adenylyltransferase (431 aa).

Lysine 39 contributes to the beta-D-fructose 1,6-bisphosphate binding site. The AMP site is built by arginine 40, histidine 46, and arginine 52. Residues tyrosine 114, glycine 179, glutamate 194–lysine 195, and serine 212 contribute to the alpha-D-glucose 1-phosphate site. Glutamate 370 and arginine 386 together coordinate AMP. Residues arginine 419–arginine 423 and glutamine 429–arginine 431 contribute to the beta-D-fructose 1,6-bisphosphate site.

It belongs to the bacterial/plant glucose-1-phosphate adenylyltransferase family. Homotetramer.

The enzyme catalyses alpha-D-glucose 1-phosphate + ATP + H(+) = ADP-alpha-D-glucose + diphosphate. It participates in glycan biosynthesis; glycogen biosynthesis. With respect to regulation, allosterically activated by fructose-1,6-bisphosphate (F16BP) and inhibited by AMP. Its function is as follows. Involved in the biosynthesis of ADP-glucose, a building block required for the elongation reactions to produce glycogen. Catalyzes the reaction between ATP and alpha-D-glucose 1-phosphate (G1P) to produce pyrophosphate and ADP-Glc. This chain is Glucose-1-phosphate adenylyltransferase, found in Salmonella typhi.